The primary structure comprises 375 residues: D-alanine--D-alanine ligase (375 aa).

The ATP-grasp domain occupies lysine 145 to glutamate 348. Residue isoleucine 175 to glutamate 230 coordinates ATP. Positions 302, 315, and 317 each coordinate Mg(2+).

This sequence belongs to the D-alanine--D-alanine ligase family. Mg(2+) serves as cofactor. It depends on Mn(2+) as a cofactor.

The protein resides in the cytoplasm. The catalysed reaction is 2 D-alanine + ATP = D-alanyl-D-alanine + ADP + phosphate + H(+). The protein operates within cell wall biogenesis; peptidoglycan biosynthesis. Its function is as follows. Cell wall formation. In Baumannia cicadellinicola subsp. Homalodisca coagulata, this protein is D-alanine--D-alanine ligase.